A 223-amino-acid chain; its full sequence is Virulence transcriptional regulatory protein PhoP (223 aa).

In terms of domain architecture, Response regulatory spans 2–116 (RVLVVEDNAL…EVMARMQALM (115 aa)). Position 51 is a 4-aspartylphosphate (aspartate 51). Residues 124–222 (SQVISLPPFQ…VRGQGYLFEL (99 aa)) constitute a DNA-binding region (ompR/PhoB-type).

Phosphorylated by PhoQ.

The protein resides in the cytoplasm. In terms of biological role, member of the two-component regulatory system PhoQ/PhoP involved in virulence and adaptation to low Mg(2+) environments. Necessary for resistance to killing by polymorphonuclear leukocytes (PMNs) and cationic antimicrobial peptides (CAMP) they produce. The protein is Virulence transcriptional regulatory protein PhoP (phoP) of Shigella flexneri.